Consider the following 284-residue polypeptide: Cell division protein ZipA (284 aa).

A topological domain (periplasmic) is located at residue Met1. The chain crosses the membrane as a helical span at residues 2–22; sequence EIGLREWLIVIGIIVIAGILF. The Cytoplasmic segment spans residues 23–284; the sequence is DGWRRMRGGK…FERRALTQKR (262 aa). The disordered stretch occupies residues 47 to 140; that stretch reads PDDEGSAELL…SASHSDKDQP (94 aa). Composition is skewed to basic and acidic residues over residues 62-75, 83-102, and 119-140; these read LDTH…EHDL, REPR…EPHQ, and SRDD…KDQP.

Belongs to the ZipA family. Interacts with FtsZ via their C-terminal domains.

Its subcellular location is the cell inner membrane. Its function is as follows. Essential cell division protein that stabilizes the FtsZ protofilaments by cross-linking them and that serves as a cytoplasmic membrane anchor for the Z ring. Also required for the recruitment to the septal ring of downstream cell division proteins. The sequence is that of Cell division protein ZipA from Pseudomonas fluorescens (strain ATCC BAA-477 / NRRL B-23932 / Pf-5).